We begin with the raw amino-acid sequence, 390 residues long: Imidazolonepropionase (390 aa).

Fe(3+)-binding residues include His-71 and His-73. Residues His-71 and His-73 each coordinate Zn(2+). Arg-80, Tyr-138, and His-165 together coordinate 4-imidazolone-5-propanoate. An N-formimidoyl-L-glutamate-binding site is contributed by Tyr-138. Position 228 (His-228) interacts with Fe(3+). A Zn(2+)-binding site is contributed by His-228. Residue Gln-231 coordinates 4-imidazolone-5-propanoate. Asp-302 contacts Fe(3+). Asp-302 contacts Zn(2+). Positions 304 and 306 each coordinate N-formimidoyl-L-glutamate. Ser-307 contributes to the 4-imidazolone-5-propanoate binding site.

This sequence belongs to the metallo-dependent hydrolases superfamily. HutI family. It depends on Zn(2+) as a cofactor. Fe(3+) serves as cofactor.

It localises to the cytoplasm. It catalyses the reaction 4-imidazolone-5-propanoate + H2O = N-formimidoyl-L-glutamate. The protein operates within amino-acid degradation; L-histidine degradation into L-glutamate; N-formimidoyl-L-glutamate from L-histidine: step 3/3. Its function is as follows. Catalyzes the hydrolytic cleavage of the carbon-nitrogen bond in imidazolone-5-propanoate to yield N-formimidoyl-L-glutamate. It is the third step in the universal histidine degradation pathway. This is Imidazolonepropionase from Streptomyces griseus subsp. griseus (strain JCM 4626 / CBS 651.72 / NBRC 13350 / KCC S-0626 / ISP 5235).